The following is a 748-amino-acid chain: Signal transducer and activator of transcription 4 (748 aa).

The 96-residue stretch at 569 to 664 (WIDGYVMGFV…ENPLKYLYPD (96 aa)) folds into the SH2 domain. Lysine 667 is subject to N6-acetyllysine. Tyrosine 693 bears the Phosphotyrosine; by JAK mark. Serine 721 carries the phosphoserine; by MAP2K6 modification.

It belongs to the transcription factor STAT family. In terms of assembly, forms a homodimer or a heterodimer with a related family member. Interacts with ARL2BP. The SH2 domain interacts, in vitro, with IL12RB2 via a short cytoplasmic domain. Interacts with STAT1. Interacts with JUN; this complex efficiently interacts with the AP-1-related sequence of the IFN-gamma. Acetylation at Lys-667 is required for JAK2-mediated phosphorylation and activation of STAT4. Post-translationally, tyrosine phosphorylated upon IL12 and IFN-alpha activation, but not by IFN-gamma in T-lymphocytes and NK cells. Serine phosphorylation is required for maximal transcriptional activity but not for DNA binding. Phosphorylation by MAP2K6 at Ser-721 is required for full transcriptional activity induced by IL12. However this serine phosphorylation is not required for cell proliferation although critical for IFN-gamma production.

It is found in the cytoplasm. It localises to the nucleus. In terms of biological role, transcriptional regulator mainly expressed in hematopoietic cells that plays a critical role in cellular growth, differentiation and immune response. Plays a key role in the differentiation of T-helper 1 cells and the production of interferon-gamma. Also participates in multiple neutrophil functions including chemotaxis and production of the neutrophil extracellular traps. After IL12 binding to its receptor IL12RB2, STAT4 interacts with the intracellular domain of IL12RB2 and becomes tyrosine phosphorylated. Phosphorylated STAT4 then homodimerizes and migrates to the nucleus where it can recognize STAT target sequences present in IL12 responsive genes. Although IL12 appears to be the predominant activating signal, STAT4 can also be phosphorylated and activated in response to IFN-gamma stimulation via JAK1 and TYK2 and in response to different interleukins including IL23, IL2 and IL35. Transcription activation of IFN-gamma gene is mediated by interaction with JUN that forms a complex that efficiently interacts with the AP-1-related sequence of the IFN-gamma promoter. In response to IFN-alpha/beta signaling, acts as a transcriptional repressor and suppresses IL5 and IL13 mRNA expression during response to T-cell receptor (TCR) activation. The polypeptide is Signal transducer and activator of transcription 4 (STAT4) (Homo sapiens (Human)).